The following is a 177-amino-acid chain: MKIAIFGGSFDPPHKGHIAIVKRALEELDIDYVIIVPTYLNPFKTSFQASPSLRLRWLRKIFLPYNRVKICDYEVRKGRPTYAIETVEFLRRKYAPKKLYYIIGSDNLPTLHKWHKYQKLSHLVQFVVATRKGYKVPKKYKMIEVHEDISSTELRIHPKKRYLPPIVAEEIIRFYRS.

This sequence belongs to the NadD family.

The enzyme catalyses nicotinate beta-D-ribonucleotide + ATP + H(+) = deamido-NAD(+) + diphosphate. The protein operates within cofactor biosynthesis; NAD(+) biosynthesis; deamido-NAD(+) from nicotinate D-ribonucleotide: step 1/1. In terms of biological role, catalyzes the reversible adenylation of nicotinate mononucleotide (NaMN) to nicotinic acid adenine dinucleotide (NaAD). In Nitratiruptor sp. (strain SB155-2), this protein is Probable nicotinate-nucleotide adenylyltransferase.